The chain runs to 152 residues: Transcription elongation factor Spt5 (152 aa).

The KOW domain maps to 98–127; it reads EGDLVEVVSGPFRGMQAQVVKVTEGKGEVV.

Belongs to the archaeal Spt5 family. As to quaternary structure, heterodimer composed of Spt4 and Spt5. Interacts with RNA polymerase (RNAP).

In terms of biological role, stimulates transcription elongation. This chain is Transcription elongation factor Spt5, found in Acidianus ambivalens (Desulfurolobus ambivalens).